The chain runs to 825 residues: NT-3 growth factor receptor (825 aa).

The first 31 residues, 1–31, serve as a signal peptide directing secretion; it reads MDVSLCPAKCSFWRIFLLGSVWLDYVGSVLA. Intrachain disulfides connect Cys-32–Cys-38 and Cys-36–Cys-45. The Extracellular segment spans residues 32-429; it reads CPANCVCSKT…TVTHKPEEDT (398 aa). Asn-68, Asn-72, and Asn-79 each carry an N-linked (GlcNAc...) asparagine glycan. 2 LRR repeats span residues 104 to 125 and 128 to 149; these read GLQK…AFAK and HLRY…LFQT. N-linked (GlcNAc...) asparagine glycosylation is found at Asn-133 and Asn-163. Residues 160–209 enclose the LRRCT domain; that stretch reads NFFNCSCDIRWMQLWQEQGEAKLNNQNLYCINADGSQLPLFRMNISQCDL. 2 cysteine pairs are disulfide-bonded: Cys-164–Cys-189 and Cys-166–Cys-207. 7 N-linked (GlcNAc...) asparagine glycosylation sites follow: Asn-203, Asn-218, Asn-232, Asn-259, Asn-267, Asn-272, and Asn-294. Ig-like C2-type domains are found at residues 210 to 300 and 309 to 382; these read PEIS…VALT and SLEE…IAKN. Cys-231 and Cys-284 are disulfide-bonded. Cys-320 and Cys-362 are oxidised to a cystine. Residues Asn-375 and Asn-388 are each glycosylated (N-linked (GlcNAc...) asparagine). A helical membrane pass occupies residues 430–453; that stretch reads FGVSIAVGLAAFACVLLVVLFIMI. At 454–825 the chain is on the cytoplasmic side; it reads NKYGRRSKFG…ATPIYLDILG (372 aa). The residue at position 493 (Ser-493) is a Phosphoserine. Phosphotyrosine; by autocatalysis is present on Tyr-516. The Protein kinase domain occupies 538–825; it reads IVLKRELGEG…ATPIYLDILG (288 aa). Residues 544–552 and Lys-572 contribute to the ATP site; that span reads LGEGAFGKV. Asp-679 serves as the catalytic Proton acceptor. Phosphotyrosine; by autocatalysis occurs at positions 705, 709, and 710.

This sequence belongs to the protein kinase superfamily. Tyr protein kinase family. Insulin receptor subfamily. In terms of assembly, exists in a dynamic equilibrium between monomeric (low affinity) and dimeric (high affinity) structures. Binds SH2B2. Interacts with SQSTM1 and KIDINS220. Interacts with PTPRS. Interacts with MAPK8IP3/JIP3. Post-translationally, ligand-mediated auto-phosphorylation.

Its subcellular location is the membrane. It catalyses the reaction L-tyrosyl-[protein] + ATP = O-phospho-L-tyrosyl-[protein] + ADP + H(+). Receptor tyrosine kinase involved in nervous system and probably heart development. Upon binding of its ligand NTF3/neurotrophin-3, NTRK3 autophosphorylates and activates different signaling pathways, including the phosphatidylinositol 3-kinase/AKT and the MAPK pathways, that control cell survival and differentiation. The polypeptide is NT-3 growth factor receptor (NTRK3) (Macaca fascicularis (Crab-eating macaque)).